A 308-amino-acid polypeptide reads, in one-letter code: Taste receptor type 2 member 46 (308 aa).

A topological domain (extracellular) is located at residue Met1. Residues 2-22 form a helical membrane-spanning segment; the sequence is ITFLSITFSILVGVIFVIGNF. Over 23-46 the chain is Cytoplasmic; that stretch reads ANGFIALVNSIEWVKRQKISFADQ. The helical transmembrane segment at 47–67 threads the bilayer; the sequence is ILTGLAVSRVGLLWVLLLHLY. At 68 to 86 the chain is on the extracellular side; sequence ATEFNLAFYSVEVRITAYN. The helical transmembrane segment at 87 to 107 threads the bilayer; the sequence is VWIVTNHFSNWLSTSLSMFYL. The Cytoplasmic segment spans residues 108–126; the sequence is LKIATFSNLIFLHLKRKVK. Residues 127–147 traverse the membrane as a helical segment; that stretch reads SVILVTLLGPLLFLVCHLFVM. Residues 148-178 are Extracellular-facing; it reads NMNHIVWRKEYEGNITWRIKLRSAMYLSNVT. N-linked (GlcNAc...) asparagine glycosylation is found at Asn161 and Asn176. Residues 179–199 traverse the membrane as a helical segment; the sequence is VTMLANLIPLTLTLMSFLLLI. Topologically, residues 200 to 229 are cytoplasmic; sequence CSLCKHLKKMQVHGKGSQDPSTKVHIKALQ. Residues 230-250 traverse the membrane as a helical segment; it reads TVTSFLLLCAIYFLSMILSVW. Topologically, residues 251–258 are extracellular; sequence NFELEKKP. The chain crosses the membrane as a helical span at residues 259–279; sequence VFMFCQAVIFSYPSTHPLILI. At 280 to 308 the chain is on the cytoplasmic side; the sequence is WGNKKLKQIFLSVLWNVRYWVKGQKPSSP.

Belongs to the G-protein coupled receptor T2R family.

It localises to the membrane. Its subcellular location is the cell projection. The protein localises to the cilium membrane. Functionally, receptor that may play a role in the perception of bitterness and is gustducin-linked. May play a role in sensing the chemical composition of the gastrointestinal content. The activity of this receptor may stimulate alpha gustducin, mediate PLC-beta-2 activation and lead to the gating of TRPM5. In airway epithelial cells, binding of bitter compounds increases the intracellular calcium ion concentration and stimulates ciliary beat frequency. This Macaca mulatta (Rhesus macaque) protein is Taste receptor type 2 member 46 (TAS2R46).